A 238-amino-acid chain; its full sequence is Fatty acid metabolism regulator protein (238 aa).

Residues 6 to 74 (KGPASFAEKY…HGKPTRVNNF (69 aa)) form the HTH gntR-type domain. The segment at residues 34–53 (ERELSELIGVTRTTLREVLQ) is a DNA-binding region (H-T-H motif).

As to quaternary structure, homodimer.

It localises to the cytoplasm. In terms of biological role, multifunctional regulator of fatty acid metabolism. This chain is Fatty acid metabolism regulator protein, found in Shewanella putrefaciens (strain CN-32 / ATCC BAA-453).